A 78-amino-acid polypeptide reads, in one-letter code: Small ribosomal subunit protein bS20 (78 aa).

It belongs to the bacterial ribosomal protein bS20 family.

In terms of biological role, binds directly to 16S ribosomal RNA. In Streptococcus thermophilus (strain ATCC BAA-491 / LMD-9), this protein is Small ribosomal subunit protein bS20.